We begin with the raw amino-acid sequence, 286 residues long: Tryptophan 2,3-dioxygenase (286 aa).

Substrate-binding positions include 53 to 57, Tyr-115, and Arg-119; that span reads FIVQH. His-242 provides a ligand contact to heme. Thr-256 is a substrate binding site.

This sequence belongs to the tryptophan 2,3-dioxygenase family. Homotetramer. Heme is required as a cofactor.

The catalysed reaction is L-tryptophan + O2 = N-formyl-L-kynurenine. It participates in amino-acid degradation; L-tryptophan degradation via kynurenine pathway; L-kynurenine from L-tryptophan: step 1/2. In terms of biological role, heme-dependent dioxygenase that catalyzes the oxidative cleavage of the L-tryptophan (L-Trp) pyrrole ring and converts L-tryptophan to N-formyl-L-kynurenine. Catalyzes the oxidative cleavage of the indole moiety. The polypeptide is Tryptophan 2,3-dioxygenase (Kineococcus radiotolerans (strain ATCC BAA-149 / DSM 14245 / SRS30216)).